Reading from the N-terminus, the 430-residue chain is Serine hydroxymethyltransferase (430 aa).

120–122 (GHI) lines the (6S)-5,6,7,8-tetrahydrofolate pocket. K226 carries the post-translational modification N6-(pyridoxal phosphate)lysine.

The protein belongs to the SHMT family. In terms of assembly, homodimer. It depends on pyridoxal 5'-phosphate as a cofactor.

The protein resides in the cytoplasm. Its pathway is amino-acid biosynthesis; glycine biosynthesis; glycine from L-serine: step 1/1. Catalyzes the reversible interconversion of serine and glycine with a modified folate serving as the one-carbon carrier. Also exhibits a pteridine-independent aldolase activity toward beta-hydroxyamino acids, producing glycine and aldehydes, via a retro-aldol mechanism. This is Serine hydroxymethyltransferase from Pyrobaculum neutrophilum (strain DSM 2338 / JCM 9278 / NBRC 100436 / V24Sta) (Thermoproteus neutrophilus).